We begin with the raw amino-acid sequence, 596 residues long: Delta(24(24(1)))-sterol reductase (596 aa).

The segment at 1 to 122 (MSSRYSLRQT…GHATNGHATS (122 aa)) is disordered. Over residues 98 to 112 (NGNGNGYTNGHGNGN) the composition is skewed to gly residues. Helical transmembrane passes span 168–188 (FGTA…WIGA), 225–245 (VWAW…LLPG), 269–289 (WSLY…IWPL), 296–316 (FGPL…VAYF), 353–373 (MFFE…GTAA), 381–401 (YVSG…NACA), 419–439 (GFML…HCTI), and 454–474 (GILA…DSCN). NADP(+) is bound by residues lysine 477, arginine 481, leucine 516, and 528 to 529 (HY). The chain crosses the membrane as a helical span at residues 535 to 557 (FAVSWGLITGFESPFPWFYPVFF). Residues aspartate 568, 572 to 576 (CRRKY), and tyrosine 583 contribute to the NADP(+) site.

It belongs to the ERG4/ERG24 family.

The protein localises to the endoplasmic reticulum membrane. It carries out the reaction ergosterol + NADP(+) = ergosta-5,7,22,24(28)-tetraen-3beta-ol + NADPH + H(+). Its pathway is steroid metabolism; ergosterol biosynthesis. Functionally, delta(24(24(1)))-sterol reductase; part of the third module of ergosterol biosynthesis pathway that includes the late steps of the pathway. ERG4 catalyzes the last step of ergosterol biosynthesis by converting ergosta-5,7,22,24(28)-tetraen-3beta-ol into ergosterol. The third module or late pathway involves the ergosterol synthesis itself through consecutive reactions that mainly occur in the endoplasmic reticulum (ER) membrane. Firstly, the squalene synthase ERG9 catalyzes the condensation of 2 farnesyl pyrophosphate moieties to form squalene, which is the precursor of all steroids. Squalene synthase is crucial for balancing the incorporation of farnesyl diphosphate (FPP) into sterol and nonsterol isoprene synthesis. Secondly, squalene is converted into lanosterol by the consecutive action of the squalene epoxidase ERG1 and the lanosterol synthase ERG7. Then, the delta(24)-sterol C-methyltransferase ERG6 methylates lanosterol at C-24 to produce eburicol. Eburicol is the substrate of the sterol 14-alpha demethylase encoded by CYP51A, CYP51B and CYP51C, to yield 4,4,24-trimethyl ergosta-8,14,24(28)-trienol. CYP51B encodes the enzyme primarily responsible for sterol 14-alpha-demethylation, and plays an essential role in ascospore formation. CYP51A encodes an additional sterol 14-alpha-demethylase, induced on ergosterol depletion and responsible for the intrinsic variation in azole sensitivity. The third CYP51 isoform, CYP51C, does not encode a sterol 14-alpha-demethylase, but is required for full virulence on host wheat ears. The C-14 reductase ERG24 then reduces the C14=C15 double bond which leads to 4,4-dimethylfecosterol. A sequence of further demethylations at C-4, involving the C-4 demethylation complex containing the C-4 methylsterol oxidases ERG25, the sterol-4-alpha-carboxylate 3-dehydrogenase ERG26 and the 3-keto-steroid reductase ERG27, leads to the production of fecosterol via 4-methylfecosterol. ERG28 has a role as a scaffold to help anchor ERG25, ERG26 and ERG27 to the endoplasmic reticulum. The C-8 sterol isomerase ERG2 then catalyzes the reaction which results in unsaturation at C-7 in the B ring of sterols and thus converts fecosterol to episterol. The sterol-C5-desaturases ERG3A and ERG3BB then catalyze the introduction of a C-5 double bond in the B ring to produce 5-dehydroepisterol. The C-22 sterol desaturases ERG5A and ERG5B further convert 5-dehydroepisterol into ergosta-5,7,22,24(28)-tetraen-3beta-ol by forming the C-22(23) double bond in the sterol side chain. Finally, ergosta-5,7,22,24(28)-tetraen-3beta-ol is substrate of the C-24(28) sterol reductase ERG4 to produce ergosterol. The sequence is that of Delta(24(24(1)))-sterol reductase from Gibberella zeae (strain ATCC MYA-4620 / CBS 123657 / FGSC 9075 / NRRL 31084 / PH-1) (Wheat head blight fungus).